We begin with the raw amino-acid sequence, 377 residues long: Ribosomal RNA large subunit methyltransferase G (377 aa).

The protein belongs to the methyltransferase superfamily. RlmG family.

It is found in the cytoplasm. The enzyme catalyses guanosine(1835) in 23S rRNA + S-adenosyl-L-methionine = N(2)-methylguanosine(1835) in 23S rRNA + S-adenosyl-L-homocysteine + H(+). Functionally, specifically methylates the guanine in position 1835 (m2G1835) of 23S rRNA. The sequence is that of Ribosomal RNA large subunit methyltransferase G from Shewanella sp. (strain ANA-3).